The sequence spans 119 residues: MQRIMLRAKIHRAKVTQADLHYEGSCGIDADLLEAADIKVGEKIELYNINNGERFSTYAIQGARGSGEISLNGAAARCAHLGDLMIICTYGPMTDEEIATYTPKIVFVDEDNHFAGMKK.

Residue Ser-25 is the Schiff-base intermediate with substrate; via pyruvic acid of the active site. Ser-25 carries the pyruvic acid (Ser) modification. Thr-57 is a substrate binding site. Tyr-58 functions as the Proton donor in the catalytic mechanism. A substrate-binding site is contributed by 73–75; that stretch reads GAA.

It belongs to the PanD family. As to quaternary structure, heterooctamer of four alpha and four beta subunits. Pyruvate is required as a cofactor. Is synthesized initially as an inactive proenzyme, which is activated by self-cleavage at a specific serine bond to produce a beta-subunit with a hydroxyl group at its C-terminus and an alpha-subunit with a pyruvoyl group at its N-terminus.

Its subcellular location is the cytoplasm. The enzyme catalyses L-aspartate + H(+) = beta-alanine + CO2. The protein operates within cofactor biosynthesis; (R)-pantothenate biosynthesis; beta-alanine from L-aspartate: step 1/1. In terms of biological role, catalyzes the pyruvoyl-dependent decarboxylation of aspartate to produce beta-alanine. In Herminiimonas arsenicoxydans, this protein is Aspartate 1-decarboxylase.